The following is a 601-amino-acid chain: Elongation factor 4 (601 aa).

Residues 4–186 (SFIRNFAIIA…SIVHLVPPPK (183 aa)) form the tr-type G domain. GTP is bound by residues 16 to 21 (DHGKST) and 133 to 136 (NKID).

This sequence belongs to the TRAFAC class translation factor GTPase superfamily. Classic translation factor GTPase family. LepA subfamily.

It localises to the cell inner membrane. It catalyses the reaction GTP + H2O = GDP + phosphate + H(+). Functionally, required for accurate and efficient protein synthesis under certain stress conditions. May act as a fidelity factor of the translation reaction, by catalyzing a one-codon backward translocation of tRNAs on improperly translocated ribosomes. Back-translocation proceeds from a post-translocation (POST) complex to a pre-translocation (PRE) complex, thus giving elongation factor G a second chance to translocate the tRNAs correctly. Binds to ribosomes in a GTP-dependent manner. The sequence is that of Elongation factor 4 from Koribacter versatilis (strain Ellin345).